The chain runs to 477 residues: Interferon gamma receptor 1 (477 aa).

An N-terminal signal peptide occupies residues 1-25 (MGPQAAAGRMILLVVLMLSAKVGSG). Topologically, residues 26 to 254 (ALTSTEDPEP…PPFHDDRKDS (229 aa)) are extracellular. N-linked (GlcNAc...) asparagine glycans are attached at residues Asn61 and Asn85. Disulfide bonds link Cys83–Cys91, Cys128–Cys174, Cys203–Cys208, and Cys222–Cys243. A helical transmembrane segment spans residues 255-275 (IWILVVAPLTVFTVVILVFAY). The Cytoplasmic portion of the chain corresponds to 276–477 (WYTKKNSFKR…RLTGEAQELS (202 aa)). Disordered regions lie at residues 335 to 386 (TVTA…LSSN) and 402 to 446 (SDSG…SGYD). Ser362 is modified (phosphoserine). At Thr367 the chain carries Phosphothreonine. Ser370 carries the phosphoserine modification. Phosphothreonine occurs at positions 373 and 375. Polar residues predominate over residues 375–386 (TQRRSFSLLSSN). 2 positions are modified to phosphoserine: Ser379 and Ser402. Residues 402-416 (SDSGLVGSGSSISDL) are compositionally biased toward low complexity. Phosphotyrosine is present on Tyr445.

This sequence belongs to the type II cytokine receptor family. In terms of assembly, monomer. Heterodimer with IFNGR2, to form the IFNG receptor complex. Interacts with JAK1. Interacts (when phosphorylated) with STAT1. Interacts with SOCS1. Phosphorylated at Ser/Thr residues. Phosphorylation of Tyr-445 is required for IFNG receptor signal transduction. Influenza virus infection leads to phosphorylation in a CSNK1A1-dependent manner. Post-translationally, ubiquitinated after phosphorylation in a CSNK1A1-dependent manner, leading to the lysosome-dependent degradation. Proteasomally degraded through 'Lys-48'-mediated ubiquitination. Ubiquitination is necessary for efficient IFNGR1 signaling.

It localises to the cell membrane. Its function is as follows. Receptor subunit for interferon gamma/INFG that plays crucial roles in antimicrobial, antiviral, and antitumor responses by activating effector immune cells and enhancing antigen presentation (, PubMed:20926559, PubMed:27286456). Associates with transmembrane accessory factor IFNGR2 to form a functional receptor. Upon ligand binding, the intracellular domain of IFNGR1 opens out to allow association of downstream signaling components JAK1 and JAK2. In turn, activated JAK1 phosphorylates IFNGR1 to form a docking site for STAT1. Subsequent phosphorylation of STAT1 leads to its dimerization, translocation to the nucleus, and stimulation of target gene transcription. STAT3 can also be activated in a similar manner although activation seems weaker. IFNGR1 intracellular domain phosphorylation also provides a docking site for SOCS1 that regulates the JAK-STAT pathway by competing with STAT1 binding to IFNGR1. This is Interferon gamma receptor 1 from Mus musculus (Mouse).